The primary structure comprises 142 residues: Large ribosomal subunit protein uL13 (142 aa).

It belongs to the universal ribosomal protein uL13 family. As to quaternary structure, part of the 50S ribosomal subunit.

This protein is one of the early assembly proteins of the 50S ribosomal subunit, although it is not seen to bind rRNA by itself. It is important during the early stages of 50S assembly. The protein is Large ribosomal subunit protein uL13 of Hamiltonella defensa subsp. Acyrthosiphon pisum (strain 5AT).